Consider the following 109-residue polypeptide: Elongin-C (109 aa).

It belongs to the SKP1 family.

It is found in the nucleus. Functionally, SIII, also known as elongin, is a general transcription elongation factor that increases the RNA polymerase II transcription elongation past template-encoded arresting sites. Subunit A is transcriptionally active and its transcription activity is strongly enhanced by binding to the dimeric complex of the SIII regulatory subunits B and C (elongin BC complex). Its function is as follows. The elongin BC complex seems to be involved as an adapter protein in the proteasomal degradation of target proteins via different E3 ubiquitin ligase complexes. This is Elongin-C (tceb1) from Dictyostelium discoideum (Social amoeba).